The following is a 173-amino-acid chain: Peptidyl-prolyl cis-trans isomerase 3 (173 aa).

A PPIase cyclophilin-type domain is found at phenylalanine 7–glutamine 170.

The protein belongs to the cyclophilin-type PPIase family. Exclusively expressed in the single anterior excretory cell.

The catalysed reaction is [protein]-peptidylproline (omega=180) = [protein]-peptidylproline (omega=0). Functionally, catalyzes the cis-trans isomerization of proline imidic peptide bonds in oligopeptides. Plays a role in protein folding, transport and assembly. This Caenorhabditis elegans protein is Peptidyl-prolyl cis-trans isomerase 3 (cyn-3).